The chain runs to 364 residues: DNA replication and repair protein RecF (364 aa).

30–37 provides a ligand contact to ATP; the sequence is GKNAQGKT.

It belongs to the RecF family.

Its subcellular location is the cytoplasm. Its function is as follows. The RecF protein is involved in DNA metabolism; it is required for DNA replication and normal SOS inducibility. RecF binds preferentially to single-stranded, linear DNA. It also seems to bind ATP. The polypeptide is DNA replication and repair protein RecF (Geotalea uraniireducens (strain Rf4) (Geobacter uraniireducens)).